Consider the following 382-residue polypeptide: Queuine tRNA-ribosyltransferase (382 aa).

Residue D96 is the Proton acceptor of the active site. Substrate-binding positions include D96–F100, D151, Q194, and G221. An RNA binding region spans residues G252–S258. The active-site Nucleophile is D271. Residues T276–R280 form an RNA binding; important for wobble base 34 recognition region. Zn(2+)-binding residues include C309, C311, C314, and H340.

This sequence belongs to the queuine tRNA-ribosyltransferase family. As to quaternary structure, homodimer. Within each dimer, one monomer is responsible for RNA recognition and catalysis, while the other monomer binds to the replacement base PreQ1. The cofactor is Zn(2+).

The enzyme catalyses 7-aminomethyl-7-carbaguanine + guanosine(34) in tRNA = 7-aminomethyl-7-carbaguanosine(34) in tRNA + guanine. The protein operates within tRNA modification; tRNA-queuosine biosynthesis. In terms of biological role, catalyzes the base-exchange of a guanine (G) residue with the queuine precursor 7-aminomethyl-7-deazaguanine (PreQ1) at position 34 (anticodon wobble position) in tRNAs with GU(N) anticodons (tRNA-Asp, -Asn, -His and -Tyr). Catalysis occurs through a double-displacement mechanism. The nucleophile active site attacks the C1' of nucleotide 34 to detach the guanine base from the RNA, forming a covalent enzyme-RNA intermediate. The proton acceptor active site deprotonates the incoming PreQ1, allowing a nucleophilic attack on the C1' of the ribose to form the product. After dissociation, two additional enzymatic reactions on the tRNA convert PreQ1 to queuine (Q), resulting in the hypermodified nucleoside queuosine (7-(((4,5-cis-dihydroxy-2-cyclopenten-1-yl)amino)methyl)-7-deazaguanosine). This Lactococcus lactis subsp. lactis (strain IL1403) (Streptococcus lactis) protein is Queuine tRNA-ribosyltransferase.